A 59-amino-acid polypeptide reads, in one-letter code: Light-harvesting protein B-800-850 alpha chain E (59 aa).

The Cytoplasmic segment spans residues 1–11 (MNQGRIWTVVK). The chain crosses the membrane as a helical span at residues 12–35 (PTVGLPLLLGSVTVIAILVHFAVL). His31 is an a bacteriochlorophyll binding site. The Periplasmic portion of the chain corresponds to 36–59 (SNTTWFSKYWNGKAAAIESSVSIG).

The protein belongs to the antenna complex alpha subunit family. In terms of assembly, the core complex is formed by different alpha and beta chains, binding bacteriochlorophyll molecules, and arranged most probably in tetrameric structures disposed around the reaction center. The non-pigmented gamma chains may constitute additional components.

The protein localises to the cell inner membrane. Its function is as follows. Antenna complexes are light-harvesting systems, which transfer the excitation energy to the reaction centers. The protein is Light-harvesting protein B-800-850 alpha chain E (pucAE) of Rhodopseudomonas palustris (strain ATCC BAA-98 / CGA009).